The chain runs to 270 residues: UPF0162 protein PA3419 (270 aa).

It belongs to the UPF0162 family.

This chain is UPF0162 protein PA3419, found in Pseudomonas aeruginosa (strain ATCC 15692 / DSM 22644 / CIP 104116 / JCM 14847 / LMG 12228 / 1C / PRS 101 / PAO1).